The sequence spans 350 residues: Ribosomal RNA large subunit methyltransferase M (350 aa).

S-adenosyl-L-methionine contacts are provided by residues alanine 217–glycine 220, aspartate 236, aspartate 256, and aspartate 272. Residue lysine 301 is the Proton acceptor of the active site.

This sequence belongs to the class I-like SAM-binding methyltransferase superfamily. RNA methyltransferase RlmE family. RlmM subfamily. As to quaternary structure, monomer.

It is found in the cytoplasm. The catalysed reaction is cytidine(2498) in 23S rRNA + S-adenosyl-L-methionine = 2'-O-methylcytidine(2498) in 23S rRNA + S-adenosyl-L-homocysteine + H(+). Catalyzes the 2'-O-methylation at nucleotide C2498 in 23S rRNA. The chain is Ribosomal RNA large subunit methyltransferase M from Teredinibacter turnerae (strain ATCC 39867 / T7901).